A 230-amino-acid polypeptide reads, in one-letter code: Large ribosomal subunit protein uL1 (230 aa).

It belongs to the universal ribosomal protein uL1 family. As to quaternary structure, part of the 50S ribosomal subunit.

Its function is as follows. Binds directly to 23S rRNA. The L1 stalk is quite mobile in the ribosome, and is involved in E site tRNA release. Functionally, protein L1 is also a translational repressor protein, it controls the translation of the L11 operon by binding to its mRNA. In Caldicellulosiruptor bescii (strain ATCC BAA-1888 / DSM 6725 / KCTC 15123 / Z-1320) (Anaerocellum thermophilum), this protein is Large ribosomal subunit protein uL1.